The primary structure comprises 430 residues: Dihydrolipoyllysine-residue acetyltransferase component of pyruvate dehydrogenase complex (430 aa).

The Lipoyl-binding domain maps to 2-77; that stretch reads AFEFRLPDIG…VVGDVIVKID (76 aa). The residue at position 43 (lysine 43) is an N6-lipoyllysine. A disordered region spans residues 80-122; that stretch reads DAEDMQFKGHDDDSSSKEEPAKEEAPAEQAPVATQTEEVDENR. Residues 84–104 show a composition bias toward basic and acidic residues; that stretch reads MQFKGHDDDSSSKEEPAKEEA. The region spanning 125-162 is the Peripheral subunit-binding (PSBD) domain; sequence KAMPSVRKYAREKGVNIKAVSGSGKNGRITKEDVDAYL. The interval 164–200 is disordered; that stretch reads GGAPTASNESADSATNEEVAETPAAPAAVSLEGDFPE. Residues 177-192 are compositionally biased toward low complexity; it reads ATNEEVAETPAAPAAV. Residue histidine 401 is part of the active site.

The protein belongs to the 2-oxoacid dehydrogenase family. Forms a 24-polypeptide structural core with octahedral symmetry. The cofactor is (R)-lipoate.

It carries out the reaction N(6)-[(R)-dihydrolipoyl]-L-lysyl-[protein] + acetyl-CoA = N(6)-[(R)-S(8)-acetyldihydrolipoyl]-L-lysyl-[protein] + CoA. Functionally, the pyruvate dehydrogenase complex catalyzes the overall conversion of pyruvate to acetyl-CoA and CO(2). It contains multiple copies of three enzymatic components: pyruvate dehydrogenase (E1), dihydrolipoamide acetyltransferase (E2) and lipoamide dehydrogenase (E3). This chain is Dihydrolipoyllysine-residue acetyltransferase component of pyruvate dehydrogenase complex (pdhC), found in Staphylococcus aureus.